The primary structure comprises 427 residues: Trigger factor (427 aa).

In terms of domain architecture, PPIase FKBP-type spans 163 to 248; sequence GDTVILDFEG…LHEIKTKEVP (86 aa).

The protein belongs to the FKBP-type PPIase family. Tig subfamily.

It is found in the cytoplasm. It catalyses the reaction [protein]-peptidylproline (omega=180) = [protein]-peptidylproline (omega=0). Its function is as follows. Involved in protein export. Acts as a chaperone by maintaining the newly synthesized protein in an open conformation. Functions as a peptidyl-prolyl cis-trans isomerase. This is Trigger factor from Listeria monocytogenes serotype 4a (strain HCC23).